We begin with the raw amino-acid sequence, 357 residues long: Acyl-coenzyme A:6-aminopenicillanic-acid-acyltransferase 40 kDa form (357 aa).

6-aminopenicillanate contacts are provided by Asp121 and Arg310.

This sequence belongs to the peptidase C45 family. As to quaternary structure, the active form of the enzyme results from processing of the 40-kDa monomeric precursor to a heterodimer containing subunits of 11 and 29 kDa. In terms of processing, the pre-AAT protein is synthesized as 40 kDa precursor which is then self-processed into an 11 kDa (protein A) and a 29 kDa (protein B). The B protein carries AAT activity.

It localises to the peroxisome matrix. The catalysed reaction is isopenicillin N + phenylacetyl-CoA + H2O = penicillin G + L-2-aminoadipate + CoA + H(+). It functions in the pathway antibiotic biosynthesis; penicillin G biosynthesis; penicillin G from L-alpha-aminoadipate and L-cysteine and L-valine: step 3/3. Nonribosomal peptide synthetase; part of the gene cluster that mediates the biosynthesis of penicillin, the world's most important antibiotic. AatA catalyzes the exchange of the alpha-aminoadipyl side chain of isopenicillin N for phenylacetic acid to yield penicillin. This step occurs in the peroxisomal matrix and the penM and paaT transporters are involved in the isopenicillin N and phenylacetic acid import into the peroxisome, respectively. The penicillin biosynthesis occurs via 3 enzymatic steps, the first corresponding to the production of the tripeptide N-[(5S)-5-amino-5-carboxypentanoyl]-L-cysteinyl-D-valine (LLD-ACV or ACV) by the NRPS acvA. The tripeptide ACV is then cyclized to isopenicillin N (IPN) by the isopenicillin N synthase ipnA that forms the beta-lactam nucleus. Finally, the alpha-aminoadipyl side chain is exchanged for phenylacetic acid by the isopenicillin N acyltransferase penDE to yield penicillin in the peroxisomal matrix. This is Acyl-coenzyme A:6-aminopenicillanic-acid-acyltransferase 40 kDa form from Emericella nidulans (strain FGSC A4 / ATCC 38163 / CBS 112.46 / NRRL 194 / M139) (Aspergillus nidulans).